A 575-amino-acid polypeptide reads, in one-letter code: Urease subunit alpha (575 aa).

Positions 138–575 (GAVDCHVHLI…LPMAQRYFLF (438 aa)) constitute a Urease domain. Residues histidine 143, histidine 145, and lysine 226 each coordinate Ni(2+). Lysine 226 carries the post-translational modification N6-carboxylysine. Residue histidine 228 coordinates substrate. 2 residues coordinate Ni(2+): histidine 255 and histidine 281. Histidine 329 functions as the Proton donor in the catalytic mechanism. Aspartate 369 is a binding site for Ni(2+).

The protein belongs to the metallo-dependent hydrolases superfamily. Urease alpha subunit family. In terms of assembly, heterotrimer of UreA (gamma), UreB (beta) and UreC (alpha) subunits. Three heterotrimers associate to form the active enzyme. The cofactor is Ni cation. In terms of processing, carboxylation allows a single lysine to coordinate two nickel ions.

It localises to the cytoplasm. The enzyme catalyses urea + 2 H2O + H(+) = hydrogencarbonate + 2 NH4(+). It participates in nitrogen metabolism; urea degradation; CO(2) and NH(3) from urea (urease route): step 1/1. In Frankia alni (strain DSM 45986 / CECT 9034 / ACN14a), this protein is Urease subunit alpha.